A 274-amino-acid polypeptide reads, in one-letter code: MQQLQTVIENAFERRAEITPANTDSITREAVSQVIALLDSGALRVAEKINGEWVTHQWLKKAVLLSFRINDNRLMEGAETRFYDKVPMKFADYDEARFQREGFRVVPPASVRQGAFIARNTVLMPSYVNIGAYVDEGTMVDTWATVGSCAQIGKNVHLSGGVGIGGVLEPLQANPTIIEDNCFIGARSEVVEGVIVEEGSVISMGVFIGQSTKIYDRETGEVHYGRVPAGSVVVSGNLPSKRGDYSLYCAVIVKKVDAKTLGKVGINELLRTID.

Substrate contacts are provided by Arg-104 and Asp-141.

Belongs to the transferase hexapeptide repeat family. As to quaternary structure, homotrimer.

It localises to the cytoplasm. It catalyses the reaction (S)-2,3,4,5-tetrahydrodipicolinate + succinyl-CoA + H2O = (S)-2-succinylamino-6-oxoheptanedioate + CoA. Its pathway is amino-acid biosynthesis; L-lysine biosynthesis via DAP pathway; LL-2,6-diaminopimelate from (S)-tetrahydrodipicolinate (succinylase route): step 1/3. The chain is 2,3,4,5-tetrahydropyridine-2,6-dicarboxylate N-succinyltransferase from Edwardsiella ictaluri (strain 93-146).